The primary structure comprises 417 residues: Pre-mRNA-splicing factor PRP46 (417 aa).

WD repeat units lie at residues 119-159, 162-201, 209-248, 251-290, 293-334, 337-376, and 385-417; these read AHQG…LKAT, GHIM…SSSG, GHVG…EIMV, GHRS…TQLA, HHSK…NEFG, GENK…LLQS, and STES…WGEE.

Belongs to the WD repeat PRL1/PRL2 family. As to quaternary structure, associated with the spliceosome.

The protein resides in the cytoplasm. It is found in the nucleus. Functionally, involved in pre-mRNA splicing and required for cell cycle progression at G2/M. The chain is Pre-mRNA-splicing factor PRP46 (PRP46) from Debaryomyces hansenii (strain ATCC 36239 / CBS 767 / BCRC 21394 / JCM 1990 / NBRC 0083 / IGC 2968) (Yeast).